The chain runs to 428 residues: Tol-Pal system protein TolB (428 aa).

The first 24 residues, 1 to 24 (MPSLKTLLRGVLVAAMLVAGSARA), serve as a signal peptide directing secretion.

It belongs to the TolB family. The Tol-Pal system is composed of five core proteins: the inner membrane proteins TolA, TolQ and TolR, the periplasmic protein TolB and the outer membrane protein Pal. They form a network linking the inner and outer membranes and the peptidoglycan layer.

It is found in the periplasm. Part of the Tol-Pal system, which plays a role in outer membrane invagination during cell division and is important for maintaining outer membrane integrity. This chain is Tol-Pal system protein TolB, found in Chromobacterium violaceum (strain ATCC 12472 / DSM 30191 / JCM 1249 / CCUG 213 / NBRC 12614 / NCIMB 9131 / NCTC 9757 / MK).